The following is a 270-amino-acid chain: MINKINFVKMHGLGNDFVIVHKRDLATVCNLSQLAKNMADRHTGIGCDQCIIYEEYNNVYTMIIYNIDGSNAKLCGNATRCLAKLIYLDTGKKDITIMVGKKKLLCNVEAANKISVNVGNVSFNETWMPSRDRIWAFAERYMLDLKETMCVDIGNPHLIIFSKLEPQDQKIIGQKLQAKELFVDGVNVNFAEVKDNKIYLSVWERGAGLTLACGSGACGSFAAGLKLGFVHSPSTVVFKYGNLIMQEEDGNIIMQGEATFVMRGEYYCEK.

Residues Asn15, Gln49, and Asn66 each coordinate substrate. Cys75 functions as the Proton donor in the catalytic mechanism. Substrate is bound by residues 76–77 (GN), Asn155, Asn187, and 204–205 (ER). The Proton acceptor role is filled by Cys213. A substrate-binding site is contributed by 214–215 (GS).

The protein belongs to the diaminopimelate epimerase family. Homodimer.

Its subcellular location is the cytoplasm. The catalysed reaction is (2S,6S)-2,6-diaminopimelate = meso-2,6-diaminopimelate. Its pathway is amino-acid biosynthesis; L-lysine biosynthesis via DAP pathway; DL-2,6-diaminopimelate from LL-2,6-diaminopimelate: step 1/1. In terms of biological role, catalyzes the stereoinversion of LL-2,6-diaminopimelate (L,L-DAP) to meso-diaminopimelate (meso-DAP), a precursor of L-lysine and an essential component of the bacterial peptidoglycan. This Rickettsia typhi (strain ATCC VR-144 / Wilmington) protein is Diaminopimelate epimerase.